The sequence spans 433 residues: MAQFYSAKRRTTTRQIITVSVNDLDSFGQGVARHNGKTLFIPGLLPQENAEVAVTEDKKQYARAKVVRRLSDSPERETPRCPHFGVCGGCQQQHASVDLQQRSKSAALARLMKHDVSEVIADVPWGYRRRARLSLNYLPKTQQLQMGFRKAGSSDIVDVKQCPILAPQLEALLPKVRACLGSLQAMRHLGHVELVQATSGTLMILRHTASLSSADREKLERFSHSEGLDLYLAPDSEILETVSGEMPWYDSNGLRLTFSPRDFIQVNAGVNQKMVARALEWLDVQPEDRVLDLFCGMGNFTLPLATQAASVVGVEGVPALVEKGQQNARLNGLQNVTFYHENLEEDVTKQPWAKNGFDKVLLDPARAGAAGVMQQIIKLEPIRIVYVSCNPATLARDSEALLKAGYTIARLAMLDMFPHTGHLESMVLFSRVK.

In terms of domain architecture, TRAM spans Arg-10–Arg-68. The [4Fe-4S] cluster site is built by Cys-81, Cys-87, Cys-90, and Cys-162. S-adenosyl-L-methionine-binding residues include Gln-265, Phe-294, Asn-299, Glu-315, Asn-342, and Asp-363. Catalysis depends on Cys-389, which acts as the Nucleophile.

Belongs to the class I-like SAM-binding methyltransferase superfamily. RNA M5U methyltransferase family. RlmD subfamily.

It carries out the reaction uridine(1939) in 23S rRNA + S-adenosyl-L-methionine = 5-methyluridine(1939) in 23S rRNA + S-adenosyl-L-homocysteine + H(+). Functionally, catalyzes the formation of 5-methyl-uridine at position 1939 (m5U1939) in 23S rRNA. This Shigella flexneri serotype 5b (strain 8401) protein is 23S rRNA (uracil(1939)-C(5))-methyltransferase RlmD.